The sequence spans 535 residues: Bifunctional purine biosynthesis protein PurH (535 aa).

Positions 6-151 (TRLPVRRALI…KNHKDVAIVV (146 aa)) constitute an MGS-like domain.

Belongs to the PurH family.

The enzyme catalyses (6R)-10-formyltetrahydrofolate + 5-amino-1-(5-phospho-beta-D-ribosyl)imidazole-4-carboxamide = 5-formamido-1-(5-phospho-D-ribosyl)imidazole-4-carboxamide + (6S)-5,6,7,8-tetrahydrofolate. The catalysed reaction is IMP + H2O = 5-formamido-1-(5-phospho-D-ribosyl)imidazole-4-carboxamide. It participates in purine metabolism; IMP biosynthesis via de novo pathway; 5-formamido-1-(5-phospho-D-ribosyl)imidazole-4-carboxamide from 5-amino-1-(5-phospho-D-ribosyl)imidazole-4-carboxamide (10-formyl THF route): step 1/1. Its pathway is purine metabolism; IMP biosynthesis via de novo pathway; IMP from 5-formamido-1-(5-phospho-D-ribosyl)imidazole-4-carboxamide: step 1/1. The chain is Bifunctional purine biosynthesis protein PurH from Azotobacter vinelandii (strain DJ / ATCC BAA-1303).